The primary structure comprises 279 residues: Monoacylglycerol lipase (279 aa).

The active-site Nucleophile is the serine 110. Residues aspartate 226 and histidine 256 each act as charge relay system in the active site.

The protein belongs to the AB hydrolase superfamily. As to quaternary structure, monomer.

The protein localises to the secreted. Its subcellular location is the cell wall. It catalyses the reaction a 1-acylglycerol + H2O = glycerol + a fatty acid + H(+). The catalysed reaction is Hydrolyzes glycerol monoesters of long-chain fatty acids.. It carries out the reaction 1-butyrylglycerol + H2O = butanoate + glycerol + H(+). The enzyme catalyses 1-octanoylglycerol + H2O = octanoate + glycerol + H(+). It catalyses the reaction 1-decanoylglycerol + H2O = decanoate + glycerol + H(+). The catalysed reaction is 1-dodecanoylglycerol + H2O = dodecanoate + glycerol + H(+). It carries out the reaction 1-tetradecanoylglycerol + H2O = tetradecanoate + glycerol + H(+). The enzyme catalyses 1-(9Z-octadecenoyl)-glycerol + H2O = glycerol + (9Z)-octadecenoate + H(+). It catalyses the reaction 2-(9Z-octadecenoyl)-glycerol + H2O = glycerol + (9Z)-octadecenoate + H(+). With respect to regulation, inhibited by the serine esterase inhibitors PMSF (100%), E600 (80%) and THL (22%). Virtual screening identified a tautomer of ZINC13451138, known inhibitor for HIV-1 integrase, as a potential inhibitor. Involved in the hydrolysis of exogenous host lipids during chronic infection. Catalyzes the hydrolysis of both monoacylglycerols (MAG) and diacylglycerols (DAG), with a preference for MAG. It hydrolyzes 2-MAG, 1-3-MAG and MAG with short, medium and long chain fatty acids such as 1-monobutyroyl-rac-glycerol (MC4), 1-mono-octanoyl-rac-glycerol (MC8), 1-monodecanoyl-rac-glycerol (MC10), 1-monolauroyl-rac-glycerol (MC12), 1-monomyristoyl-rac-glycerol (MC14) and 1-mono-oleyl-rac-glycerol (MC18:1). Also able to hydrolyze DAG with short (DiC6) and medium (DiC10) fatty acid chains, but not with longest fatty acid chains. Can also hydrolyze vinyl laurate (VC12), vinyl butyrate (VC4) and vinyl propionate (VC3). In terms of biological role, induces an inflammatory response and cell apoptosis in the host cells. Increases expression of IL-6, NF-kappaB, TLR-2, TLR-6, TNF-alpha, and MyD88 in mouse alveolar macrophage RAW264.7 cells. Persistent expression induces RAW264.7 cell apoptosis in vitro. This is Monoacylglycerol lipase from Mycobacterium tuberculosis (strain ATCC 25618 / H37Rv).